The following is a 222-amino-acid chain: Small ribosomal subunit protein eS1 (222 aa).

The protein belongs to the eukaryotic ribosomal protein eS1 family.

This Pyrobaculum neutrophilum (strain DSM 2338 / JCM 9278 / NBRC 100436 / V24Sta) (Thermoproteus neutrophilus) protein is Small ribosomal subunit protein eS1.